We begin with the raw amino-acid sequence, 446 residues long: tRNA-2-methylthio-N(6)-dimethylallyladenosine synthase (446 aa).

One can recognise an MTTase N-terminal domain in the interval 3 to 124 (KKLYIKTYGC…LPELISKVVR (122 aa)). The [4Fe-4S] cluster site is built by Cys-12, Cys-48, Cys-87, Cys-162, Cys-166, and Cys-169. Positions 148–380 (YPQGASSFIS…QKELAAQQLA (233 aa)) constitute a Radical SAM core domain. The TRAM domain maps to 383 to 446 (ESCIGSTMKV…LNSLSGEIYR (64 aa)).

It belongs to the methylthiotransferase family. MiaB subfamily. Monomer. It depends on [4Fe-4S] cluster as a cofactor.

It localises to the cytoplasm. It catalyses the reaction N(6)-dimethylallyladenosine(37) in tRNA + (sulfur carrier)-SH + AH2 + 2 S-adenosyl-L-methionine = 2-methylsulfanyl-N(6)-dimethylallyladenosine(37) in tRNA + (sulfur carrier)-H + 5'-deoxyadenosine + L-methionine + A + S-adenosyl-L-homocysteine + 2 H(+). In terms of biological role, catalyzes the methylthiolation of N6-(dimethylallyl)adenosine (i(6)A), leading to the formation of 2-methylthio-N6-(dimethylallyl)adenosine (ms(2)i(6)A) at position 37 in tRNAs that read codons beginning with uridine. In Rickettsia bellii (strain RML369-C), this protein is tRNA-2-methylthio-N(6)-dimethylallyladenosine synthase.